A 304-amino-acid chain; its full sequence is Recombination-associated protein RdgC (304 aa).

Belongs to the RdgC family.

The protein resides in the cytoplasm. The protein localises to the nucleoid. In terms of biological role, may be involved in recombination. The chain is Recombination-associated protein RdgC from Shewanella sp. (strain W3-18-1).